Consider the following 327-residue polypeptide: Auxin-responsive protein IAA18 (327 aa).

Disordered regions lie at residues 26–45, 52–98, and 180–202; these read VKEA…DEDK, GLPG…IGTT, and NLTN…DDKA. Residues 49-53 carry the EAR-like (transcriptional repression) motif; that stretch reads LKLGL. Residues 58–69 are compositionally biased toward basic and acidic residues; sequence QEERAADSREKI. Residues 70 to 82 show a composition bias toward low complexity; that stretch reads QQQQRESSSEPSI. A compositionally biased stretch (polar residues) spans 180-189; the sequence is NLTNGSSFKQ. The span at 190–202 shows a compositional bias: basic and acidic residues; it reads SPERQNDEADDKA. Positions 209–313 constitute a PB1 domain; that stretch reads RPLVKINMDG…TVKRLRVMRR (105 aa).

Belongs to the Aux/IAA family. As to quaternary structure, homodimers and heterodimers. In terms of tissue distribution, highly expressed in flowers. Expressed in roots and etiolated seedlings.

It is found in the nucleus. Aux/IAA proteins are short-lived transcriptional factors that function as repressors of early auxin response genes at low auxin concentrations. The sequence is that of Auxin-responsive protein IAA18 (IAA18) from Oryza sativa subsp. japonica (Rice).